Reading from the N-terminus, the 142-residue chain is Hemoglobin subunit alpha (142 aa).

An N-acetylserine modification is found at Ser1. A Globin domain is found at 1 to 142; sequence SLSDKDKAAV…LSLALAEKYR (142 aa). Residues His59 and His88 each contribute to the heme b site.

Belongs to the globin family. In terms of assembly, heterotetramer of two alpha chains and two beta chains. In terms of tissue distribution, red blood cells.

Functionally, involved in oxygen transport from gills to the various peripheral tissues. This chain is Hemoglobin subunit alpha, found in Lycodes reticulatus (Arctic eelpout).